A 166-amino-acid chain; its full sequence is Macrocypin-5a (166 aa).

A disordered region spans residues 20–39 (NIPGGMYASSKDGKDEPVTA).

It belongs to the protease inhibitor I85 family.

Its function is as follows. Inhibits papain and cysteine cathepsin endopeptidases, and also inhibits cathepsins B and H, which exhibit both exopeptidase and endopeptidase activities. The chain is Macrocypin-5a from Macrolepiota procera (Parasol mushroom).